The primary structure comprises 156 residues: Small ribosomal subunit protein uS7 (156 aa).

The protein belongs to the universal ribosomal protein uS7 family. In terms of assembly, part of the 30S ribosomal subunit. Contacts proteins S9 and S11.

In terms of biological role, one of the primary rRNA binding proteins, it binds directly to 16S rRNA where it nucleates assembly of the head domain of the 30S subunit. Is located at the subunit interface close to the decoding center, probably blocks exit of the E-site tRNA. The polypeptide is Small ribosomal subunit protein uS7 (Geobacillus sp. (strain WCH70)).